The sequence spans 206 residues: MAVRSKSSKAWLHEHVNDHYVHMAQKDGYRARAAYKLLEINEKDKLIKPGTVLADLGSAPGSWSQVAAKLTGTSGAVFALDILPMEAIGGVSFIQGDFRENDVLAQFEGLLNNRPLDLVICDMAPNMSGNAVSDQARSFYLCELALDFASQHLKTGGSFLVKVFQGAGYQEYMAAMREFFGTVQTRKPEASRNRSSEIYLLGKNKR.

G61, W63, D81, D97, and D122 together coordinate S-adenosyl-L-methionine. Catalysis depends on K162, which acts as the Proton acceptor.

It belongs to the class I-like SAM-binding methyltransferase superfamily. RNA methyltransferase RlmE family.

Its subcellular location is the cytoplasm. The enzyme catalyses uridine(2552) in 23S rRNA + S-adenosyl-L-methionine = 2'-O-methyluridine(2552) in 23S rRNA + S-adenosyl-L-homocysteine + H(+). Specifically methylates the uridine in position 2552 of 23S rRNA at the 2'-O position of the ribose in the fully assembled 50S ribosomal subunit. In Neisseria meningitidis serogroup C / serotype 2a (strain ATCC 700532 / DSM 15464 / FAM18), this protein is Ribosomal RNA large subunit methyltransferase E.